Reading from the N-terminus, the 122-residue chain is UPF0102 protein Dred_2035 (122 aa).

It belongs to the UPF0102 family.

The polypeptide is UPF0102 protein Dred_2035 (Desulforamulus reducens (strain ATCC BAA-1160 / DSM 100696 / MI-1) (Desulfotomaculum reducens)).